The sequence spans 242 residues: 1-(5-phosphoribosyl)-5-[(5-phosphoribosylamino)methylideneamino] imidazole-4-carboxamide isomerase (242 aa).

Residue Asp8 is the Proton acceptor of the active site. Asp129 functions as the Proton donor in the catalytic mechanism.

This sequence belongs to the HisA/HisF family.

The protein resides in the cytoplasm. It catalyses the reaction 1-(5-phospho-beta-D-ribosyl)-5-[(5-phospho-beta-D-ribosylamino)methylideneamino]imidazole-4-carboxamide = 5-[(5-phospho-1-deoxy-D-ribulos-1-ylimino)methylamino]-1-(5-phospho-beta-D-ribosyl)imidazole-4-carboxamide. It participates in amino-acid biosynthesis; L-histidine biosynthesis; L-histidine from 5-phospho-alpha-D-ribose 1-diphosphate: step 4/9. This Clostridium botulinum (strain Langeland / NCTC 10281 / Type F) protein is 1-(5-phosphoribosyl)-5-[(5-phosphoribosylamino)methylideneamino] imidazole-4-carboxamide isomerase.